A 429-amino-acid polypeptide reads, in one-letter code: Enolase (429 aa).

Residue Gln162 coordinates (2R)-2-phosphoglycerate. The active-site Proton donor is Glu204. The Mg(2+) site is built by Asp241, Glu283, and Asp310. Positions 335, 364, 365, and 386 each coordinate (2R)-2-phosphoglycerate. Lys335 serves as the catalytic Proton acceptor.

It belongs to the enolase family. Mg(2+) is required as a cofactor.

The protein resides in the cytoplasm. It localises to the secreted. It is found in the cell surface. The catalysed reaction is (2R)-2-phosphoglycerate = phosphoenolpyruvate + H2O. It participates in carbohydrate degradation; glycolysis; pyruvate from D-glyceraldehyde 3-phosphate: step 4/5. Catalyzes the reversible conversion of 2-phosphoglycerate (2-PG) into phosphoenolpyruvate (PEP). It is essential for the degradation of carbohydrates via glycolysis. The polypeptide is Enolase (Mycobacterium tuberculosis (strain ATCC 25177 / H37Ra)).